Reading from the N-terminus, the 155-residue chain is Cyanate hydratase (155 aa).

Active-site residues include arginine 95, glutamate 98, and serine 121.

This sequence belongs to the cyanase family.

It catalyses the reaction cyanate + hydrogencarbonate + 3 H(+) = NH4(+) + 2 CO2. Functionally, catalyzes the reaction of cyanate with bicarbonate to produce ammonia and carbon dioxide. The protein is Cyanate hydratase of Pseudomonas savastanoi pv. phaseolicola (strain 1448A / Race 6) (Pseudomonas syringae pv. phaseolicola (strain 1448A / Race 6)).